We begin with the raw amino-acid sequence, 545 residues long: Intercellular adhesion molecule 1 (545 aa).

An N-terminal signal peptide occupies residues 1–27 (MASTRARPMLPLLLVLVAVVIPGPVGA). The Extracellular portion of the chain corresponds to 28–492 (QVSIHPTEAF…HLTVLYHDQN (465 aa)). Ig-like C2-type domains follow at residues 41 to 103 (GGSV…QSSA) and 128 to 193 (GKNL…LDLR). Asn-47 is a glycosylation site (N-linked (GlcNAc...) asparagine). Disulfide bonds link Cys-48-Cys-92, Cys-52-Cys-96, and Cys-135-Cys-186. N-linked (GlcNAc...) asparagine glycosylation is present at Asn-154. Positions 177–179 (RGD) match the Cell attachment site motif. Asn-183 and Asn-202 each carry an N-linked (GlcNAc...) asparagine glycan. One can recognise an Ig-like C2-type 3 domain in the interval 230–297 (GTQQKFLCSL…LRCVLELADQ (68 aa)). An intrachain disulfide couples Cys-237 to Cys-290. Residues Asn-309, Asn-344, Asn-396, Asn-417, Asn-439, and Asn-464 are each glycosylated (N-linked (GlcNAc...) asparagine). Residues 325–389 (GDQVTVKCEA…FFCSAALEVD (65 aa)) enclose the Ig-like C2-type 4 domain. Cysteines 332 and 382 form a disulfide. The disordered stretch occupies residues 343–365 (LNSTSPRPPTSQGTSPRPPTSQI). Disulfide bonds link Cys-414/Cys-430, Cys-430/Cys-469, and Cys-442/Cys-469. An Ig-like C2-type 5 domain is found at 423–476 (GSQQTLTCQPQGNPAPNLTCSRKADGVPLPIGMVKSVKREMNGTYKCRAFSSRG). Residues 493 to 517 (TWVIIVGVLVLIIAGFVIVASIYTY) form a helical membrane-spanning segment. Residues 518 to 545 (YRQRKIRIYKLQKAQEEALKLKVQAPPP) lie on the Cytoplasmic side of the membrane.

Belongs to the immunoglobulin superfamily. ICAM family. As to quaternary structure, homodimer. Interacts with MUC1 and promotes cell aggregation in epithelial cells. Interacts with ARHGEF26/SGEF. Interacts (on T cell side) with CD81, CD247 and CD9 at immunological synapses between antigen-presenting cells and T cells. In terms of processing, monoubiquitinated, which is promoted by MARCH9 and leads to endocytosis.

It is found in the membrane. Its function is as follows. ICAM proteins are ligands for the leukocyte adhesion protein LFA-1 (integrin alpha-L/beta-2). During leukocyte trans-endothelial migration, ICAM1 engagement promotes the assembly of endothelial apical cups through ARHGEF26/SGEF and RHOG activation. This chain is Intercellular adhesion molecule 1 (Icam1), found in Rattus norvegicus (Rat).